The sequence spans 562 residues: Tetratricopeptide repeat protein 39A (562 aa).

TPR repeat units follow at residues 273–306, 463–496, and 504–537; these read AIFL…QQNW, CVVK…EKRI, and PNAM…YKNY.

It belongs to the TTC39 family.

This is Tetratricopeptide repeat protein 39A (ttc39a) from Xenopus tropicalis (Western clawed frog).